The sequence spans 727 residues: Catalase-peroxidase (727 aa).

A disordered region spans residues 1–21; sequence MDAKVEDNIAGKCPMGHGRGP. Residues 95–217 constitute a cross-link (tryptophyl-tyrosyl-methioninium (Trp-Tyr) (with M-243)); the sequence is WHAAGTYRIT…LGAVQMGLIY (123 aa). H96 (proton acceptor) is an active-site residue. Positions 217–243 form a cross-link, tryptophyl-tyrosyl-methioninium (Tyr-Met) (with W-95); it reads YVNPEGPNGNPDPLASARDIRETFARM. Residue H258 participates in heme b binding.

The protein belongs to the peroxidase family. Peroxidase/catalase subfamily. As to quaternary structure, homodimer or homotetramer. Heme b serves as cofactor. In terms of processing, formation of the three residue Trp-Tyr-Met cross-link is important for the catalase, but not the peroxidase activity of the enzyme.

It carries out the reaction H2O2 + AH2 = A + 2 H2O. The catalysed reaction is 2 H2O2 = O2 + 2 H2O. In terms of biological role, bifunctional enzyme with both catalase and broad-spectrum peroxidase activity. Important for stationary phase survival. This is Catalase-peroxidase from Caulobacter vibrioides (strain ATCC 19089 / CIP 103742 / CB 15) (Caulobacter crescentus).